We begin with the raw amino-acid sequence, 291 residues long: MLIDGFTVVAQIVNFLILVWLLKRFFYRPILDALDERENRIASELAAATGKQREAEAELHRFRQKNEEFDQRREVLLTTVTDEVRAERQRLMEAAHADADRIRISRNEAQQREYQVLHDAIERRTCAEVLAITRKVLADLAGTTLEIHMTEAFIRRLRTLGPEEKAQLAVALQAGGVESGHSATFQVFPPIVGQGSPSGIAVILVRSAFELPAEQQEKISTVIRETLKEEVRFNFGVEPNLISGIEMIAGGHKVAWSVAGYLASLEEEVSRLLNAKGAVGEGEAKSSTAAL.

The helical transmembrane segment at 2–22 threads the bilayer; it reads LIDGFTVVAQIVNFLILVWLL.

It belongs to the ATPase B chain family. F-type ATPases have 2 components, F(1) - the catalytic core - and F(0) - the membrane proton channel. F(1) has five subunits: alpha(3), beta(3), gamma(1), delta(1), epsilon(1). F(0) has three main subunits: a(1), b(2) and c(10-14). The alpha and beta chains form an alternating ring which encloses part of the gamma chain. F(1) is attached to F(0) by a central stalk formed by the gamma and epsilon chains, while a peripheral stalk is formed by the delta and b chains.

It localises to the cell inner membrane. In terms of biological role, f(1)F(0) ATP synthase produces ATP from ADP in the presence of a proton or sodium gradient. F-type ATPases consist of two structural domains, F(1) containing the extramembraneous catalytic core and F(0) containing the membrane proton channel, linked together by a central stalk and a peripheral stalk. During catalysis, ATP synthesis in the catalytic domain of F(1) is coupled via a rotary mechanism of the central stalk subunits to proton translocation. Component of the F(0) channel, it forms part of the peripheral stalk, linking F(1) to F(0). This chain is ATP synthase subunit b 2, found in Nitrosospira multiformis (strain ATCC 25196 / NCIMB 11849 / C 71).